Here is a 354-residue protein sequence, read N- to C-terminus: Ion-translocating oxidoreductase complex subunit D (354 aa).

The next 3 helical transmembrane spans lie at 9–28, 67–87, and 117–137; these read IMLHVCLALLPTTAWGLYLF, LLSGWLLALTLPPWAPWWIAV, and VALLIAFPLQMTTWALPLPLG. Threonine 165 carries the post-translational modification FMN phosphoryl threonine. Helical transmembrane passes span 200 to 220, 222 to 242, 249 to 269, 277 to 297, and 301 to 321; these read GSLGETSELLILLGGLWLLAL, IIHWEIPLGMLLTVGALAALA, VHGGGLFHLTSGGLLLGALFI, PISRSGRLIFAIGCGALVFVI, and GNFPEAVAFAVLLMNALVPLI.

The protein belongs to the NqrB/RnfD family. The complex is composed of six subunits: RnfA, RnfB, RnfC, RnfD, RnfE and RnfG. FMN serves as cofactor.

It localises to the cell inner membrane. Its function is as follows. Part of a membrane-bound complex that couples electron transfer with translocation of ions across the membrane. In Stutzerimonas stutzeri (Pseudomonas stutzeri), this protein is Ion-translocating oxidoreductase complex subunit D.